The following is a 546-amino-acid chain: CTP synthase (546 aa).

Residues 1–269 form an amidoligase domain region; it reads MNSNTKIIFV…DAKLVELLNL (269 aa). S16 lines the CTP pocket. S16 contributes to the UTP binding site. Residues 17-22 and D74 each bind ATP; that span reads SLGKGV. Positions 74 and 143 each coordinate Mg(2+). CTP contacts are provided by residues 150–152, 190–195, and K226; these read DIE and KTKPTQ. Residues 190–195 and K226 contribute to the UTP site; that span reads KTKPTQ. In terms of domain architecture, Glutamine amidotransferase type-1 spans 294 to 546; it reads IIAMVGKYVS…IQAAIENSNN (253 aa). G356 serves as a coordination point for L-glutamine. C383 (nucleophile; for glutamine hydrolysis) is an active-site residue. L-glutamine-binding positions include 384 to 387, E407, and R474; that span reads LGMQ. Residues H519 and E521 contribute to the active site.

Belongs to the CTP synthase family. In terms of assembly, homotetramer.

The catalysed reaction is UTP + L-glutamine + ATP + H2O = CTP + L-glutamate + ADP + phosphate + 2 H(+). It carries out the reaction L-glutamine + H2O = L-glutamate + NH4(+). The enzyme catalyses UTP + NH4(+) + ATP = CTP + ADP + phosphate + 2 H(+). The protein operates within pyrimidine metabolism; CTP biosynthesis via de novo pathway; CTP from UDP: step 2/2. Allosterically activated by GTP, when glutamine is the substrate; GTP has no effect on the reaction when ammonia is the substrate. The allosteric effector GTP functions by stabilizing the protein conformation that binds the tetrahedral intermediate(s) formed during glutamine hydrolysis. Inhibited by the product CTP, via allosteric rather than competitive inhibition. In terms of biological role, catalyzes the ATP-dependent amination of UTP to CTP with either L-glutamine or ammonia as the source of nitrogen. Regulates intracellular CTP levels through interactions with the four ribonucleotide triphosphates. This is CTP synthase from Francisella tularensis subsp. holarctica (strain FTNF002-00 / FTA).